The sequence spans 184 residues: MKVRAFLAVDLDEGLRDHVSRIQDTLKSADAQVKFVEPENLHFTLKFFGDVGEGKLRRIENVVRDTLRGYEPFEISIRGAGVFPNPRYIRVVWLGVENPETFSDLQRSLDMEFVKMGFRPERDYVPHLTVGRVKGPRNRDKLAELIGELQNVEVGSMRVSEVSLKRSELTPAGPIYTDMEVFRL.

Histidine 42 acts as the Proton donor in catalysis. 2 consecutive short sequence motifs (HXTX) follow at residues 42-45 and 127-130; these read HFTL and HLTV. Histidine 127 functions as the Proton acceptor in the catalytic mechanism.

This sequence belongs to the 2H phosphoesterase superfamily. ThpR family.

It catalyses the reaction a 3'-end 2',3'-cyclophospho-ribonucleotide-RNA + H2O = a 3'-end 2'-phospho-ribonucleotide-RNA + H(+). Functionally, hydrolyzes RNA 2',3'-cyclic phosphodiester to an RNA 2'-phosphomonoester. The sequence is that of RNA 2',3'-cyclic phosphodiesterase from Methanothermobacter thermautotrophicus (strain ATCC 29096 / DSM 1053 / JCM 10044 / NBRC 100330 / Delta H) (Methanobacterium thermoautotrophicum).